Reading from the N-terminus, the 141-residue chain is Zinc finger protein 593 homolog (141 aa).

A disordered region spans residues 1–32 (MGRYSGHGGTHTKKKQYKRARSTKNRAKDIDQ). Residues 10-25 (THTKKKQYKRARSTKN) are compositionally biased toward basic residues. The C2H2-type zinc-finger motif lies at 60–84 (NYCIHCSKHFVTNEDLQSHIKGKPH).

This sequence belongs to the ZNF593/BUD20 C2H2-type zinc-finger protein family. As to quaternary structure, associates with pre-60S ribosomal particles; released from the pre-60S particle very early in the cytoplasm.

The protein localises to the nucleus. Its subcellular location is the cytoplasm. Involved in pre-60S ribosomal particles maturation by promoting the nuclear export of the 60S ribosome. In Dictyostelium discoideum (Social amoeba), this protein is Zinc finger protein 593 homolog.